A 586-amino-acid polypeptide reads, in one-letter code: Phosphatidylinositol-3-phosphatase SAC1-B (586 aa).

At 1 to 519 (MASTYNSFNL…TPLHEPKDWK (519 aa)) the chain is on the cytoplasmic side. Positions 121 to 450 (LNSVLNTDGF…ANACAKQYAG (330 aa)) constitute an SAC domain. Residues 451–586 (TGALKTDFTR…PRLVQKEKMD (136 aa)) are essential for phosphatidylinositol-4-phosphate phosphatase activity. Residues 520-540 (FLTLPIIMVVAFSMCIICLLM) traverse the membrane as a helical segment. The Lumenal portion of the chain corresponds to 541-547 (AGDTWTE). The chain crosses the membrane as a helical span at residues 548–568 (TLAYVLFWGSASVVTGGVILF). Residues 569–586 (NGRDFVDAPRLVQKEKMD) are Cytoplasmic-facing.

Its subcellular location is the endoplasmic reticulum membrane. The protein resides in the golgi apparatus membrane. It catalyses the reaction a 1,2-diacyl-sn-glycero-3-phospho-(1D-myo-inositol-3-phosphate) + H2O = a 1,2-diacyl-sn-glycero-3-phospho-(1D-myo-inositol) + phosphate. The enzyme catalyses a 1,2-diacyl-sn-glycero-3-phospho-(1D-myo-inositol 4-phosphate) + H2O = a 1,2-diacyl-sn-glycero-3-phospho-(1D-myo-inositol) + phosphate. In terms of biological role, phosphoinositide phosphatase which catalyzes the hydrolysis of phosphatidylinositol 4-phosphate (PtdIns(4)P), phosphatidylinositol 3-phosphate (PtdIns(3)P) and has low activity towards phosphatidylinositol-3,5-bisphosphate (PtdIns(3,5)P2). The polypeptide is Phosphatidylinositol-3-phosphatase SAC1-B (sacm1lb) (Danio rerio (Zebrafish)).